The primary structure comprises 488 residues: Cobyric acid synthase (488 aa).

The 191-residue stretch at 252-442 (RTRICVPILP…VHGLFASDAF (191 aa)) folds into the GATase cobBQ-type domain. The active-site Nucleophile is the Cys334. The active site involves His434.

The protein belongs to the CobB/CobQ family. CobQ subfamily.

Its pathway is cofactor biosynthesis; adenosylcobalamin biosynthesis. Functionally, catalyzes amidations at positions B, D, E, and G on adenosylcobyrinic A,C-diamide. NH(2) groups are provided by glutamine, and one molecule of ATP is hydrogenolyzed for each amidation. The chain is Cobyric acid synthase from Xanthobacter autotrophicus (strain ATCC BAA-1158 / Py2).